A 203-amino-acid chain; its full sequence is MSKVIGITGGIATGKSTVSELLTAYGFKIVDADIASREAVKKGSKGLEQVKEIFGEEAIDENGEMNRQYVGEIVFNHPDLREALNEIVHPIVREIMEQEKNNYLEHGYHVIMDIPLLYENELQDTVDEVWVVYTSESIQIDRLMERNNLSLEDAKARVYSQISIDKKSRMADHVIDNLGDKLELKQNLQKLLEEEGYIQSESE.

Positions 4–203 (VIGITGGIAT…EEGYIQSESE (200 aa)) constitute a DPCK domain. Position 12–17 (12–17 (ATGKST)) interacts with ATP.

This sequence belongs to the CoaE family.

The protein localises to the cytoplasm. The catalysed reaction is 3'-dephospho-CoA + ATP = ADP + CoA + H(+). The protein operates within cofactor biosynthesis; coenzyme A biosynthesis; CoA from (R)-pantothenate: step 5/5. Its function is as follows. Catalyzes the phosphorylation of the 3'-hydroxyl group of dephosphocoenzyme A to form coenzyme A. This chain is Dephospho-CoA kinase, found in Staphylococcus epidermidis (strain ATCC 35984 / DSM 28319 / BCRC 17069 / CCUG 31568 / BM 3577 / RP62A).